The following is a 218-amino-acid chain: Small ribosomal subunit protein uS7 (218 aa).

The protein belongs to the universal ribosomal protein uS7 family. In terms of assembly, part of the 30S ribosomal subunit.

Its function is as follows. One of the primary rRNA binding proteins, it binds directly to 16S rRNA where it nucleates assembly of the head domain of the 30S subunit. Is located at the subunit interface close to the decoding center. In Pyrococcus horikoshii (strain ATCC 700860 / DSM 12428 / JCM 9974 / NBRC 100139 / OT-3), this protein is Small ribosomal subunit protein uS7 (rps7).